A 412-amino-acid polypeptide reads, in one-letter code: Divalent metal cation transporter MntH (412 aa).

11 helical membrane passes run Phe-19–Ala-39, Ala-46–Ile-66, Val-94–Ile-114, Leu-122–Ile-142, Leu-155–Ser-175, Ala-196–His-216, Ile-241–Phe-261, Ile-290–Gly-310, Ser-329–Leu-349, Val-350–Phe-370, and Ile-389–Leu-409.

This sequence belongs to the NRAMP family.

The protein resides in the cell inner membrane. Functionally, h(+)-stimulated, divalent metal cation uptake system. This is Divalent metal cation transporter MntH from Enterobacter sp. (strain 638).